The chain runs to 159 residues: Phosphopantetheine adenylyltransferase (159 aa).

Substrate is bound at residue Thr10. Residues 10 to 11 (TF) and His18 each bind ATP. Residues Lys42, Leu74, and Arg88 each contribute to the substrate site. Residues 89-91 (GLR), Glu99, and 124-130 (NSFISST) each bind ATP.

This sequence belongs to the bacterial CoaD family. In terms of assembly, homohexamer. Requires Mg(2+) as cofactor.

Its subcellular location is the cytoplasm. It carries out the reaction (R)-4'-phosphopantetheine + ATP + H(+) = 3'-dephospho-CoA + diphosphate. The protein operates within cofactor biosynthesis; coenzyme A biosynthesis; CoA from (R)-pantothenate: step 4/5. Reversibly transfers an adenylyl group from ATP to 4'-phosphopantetheine, yielding dephospho-CoA (dPCoA) and pyrophosphate. This Shewanella halifaxensis (strain HAW-EB4) protein is Phosphopantetheine adenylyltransferase.